The sequence spans 219 residues: Large ribosomal subunit protein uL3 (219 aa).

Disordered regions lie at residues 62–81 and 136–156; these read DSRSSKYANKPAEGHAKKAG and QARGPMSHGSHFHRAPGSVGM.

It belongs to the universal ribosomal protein uL3 family. In terms of assembly, part of the 50S ribosomal subunit. Forms a cluster with proteins L14 and L19.

One of the primary rRNA binding proteins, it binds directly near the 3'-end of the 23S rRNA, where it nucleates assembly of the 50S subunit. This chain is Large ribosomal subunit protein uL3, found in Staphylococcus saprophyticus subsp. saprophyticus (strain ATCC 15305 / DSM 20229 / NCIMB 8711 / NCTC 7292 / S-41).